A 207-amino-acid polypeptide reads, in one-letter code: MYPNSRYILPSLDERTAYGYKQVDPYTKLFEDRIVFLGVQIDDASADDVMAQLLVLEGQDAERDIIMYINSPGGSFTAMTAIYDTMQYIRPQIQTVCLGQAASAAAVILSAGTPGKRLALPNARILIHQPVVASSGYGQASDIEIQAREIMRMREWLEKTLAQHSNKSVKQVSKDIDRDKILSSEQALEYGLIDQILVSRKAGLGKK.

Ser-103 functions as the Nucleophile in the catalytic mechanism. Residue His-128 is part of the active site.

It belongs to the peptidase S14 family. In terms of assembly, fourteen ClpP subunits assemble into 2 heptameric rings which stack back to back to give a disk-like structure with a central cavity, resembling the structure of eukaryotic proteasomes.

It is found in the cytoplasm. The catalysed reaction is Hydrolysis of proteins to small peptides in the presence of ATP and magnesium. alpha-casein is the usual test substrate. In the absence of ATP, only oligopeptides shorter than five residues are hydrolyzed (such as succinyl-Leu-Tyr-|-NHMec, and Leu-Tyr-Leu-|-Tyr-Trp, in which cleavage of the -Tyr-|-Leu- and -Tyr-|-Trp bonds also occurs).. Its function is as follows. Cleaves peptides in various proteins in a process that requires ATP hydrolysis. Has a chymotrypsin-like activity. Plays a major role in the degradation of misfolded proteins. This Tropheryma whipplei (strain Twist) (Whipple's bacillus) protein is ATP-dependent Clp protease proteolytic subunit 1.